Here is a 265-residue protein sequence, read N- to C-terminus: 3-methyl-2-oxobutanoate hydroxymethyltransferase (265 aa).

The Mg(2+) site is built by Asp-45 and Asp-84. 3-methyl-2-oxobutanoate is bound by residues 45–46, Asp-84, and Lys-112; that span reads DS. Glu-114 is a binding site for Mg(2+). The active-site Proton acceptor is Glu-181.

Belongs to the PanB family. Homodecamer; pentamer of dimers. Requires Mg(2+) as cofactor.

It is found in the cytoplasm. It carries out the reaction 3-methyl-2-oxobutanoate + (6R)-5,10-methylene-5,6,7,8-tetrahydrofolate + H2O = 2-dehydropantoate + (6S)-5,6,7,8-tetrahydrofolate. It participates in cofactor biosynthesis; (R)-pantothenate biosynthesis; (R)-pantoate from 3-methyl-2-oxobutanoate: step 1/2. Catalyzes the reversible reaction in which hydroxymethyl group from 5,10-methylenetetrahydrofolate is transferred onto alpha-ketoisovalerate to form ketopantoate. The protein is 3-methyl-2-oxobutanoate hydroxymethyltransferase of Yersinia enterocolitica serotype O:8 / biotype 1B (strain NCTC 13174 / 8081).